An 814-amino-acid polypeptide reads, in one-letter code: Putative E3 ubiquitin-protein ligase RF298 (814 aa).

3 disordered regions span residues 1-51 (MVEK…ASLT), 221-301 (SVSN…TKSA), and 411-441 (ALPANNAPAPVASEKKSGSEPEEKPSVSTKP). A compositionally biased stretch (low complexity) spans 221 to 231 (SVSNASKSSES). Polar residues predominate over residues 289-301 (SVSTASGEGTKSA). Positions 423-435 (SEKKSGSEPEEKP) are enriched in basic and acidic residues. Residues 506–710 (ELKALRKEKE…KLKSDSLKIA (205 aa)) adopt a coiled-coil conformation. An RING-type zinc finger spans residues 760–800 (CVMCLSEEMSVIFLPCAHQVLCSKCNQLHEKEAMEDCPSCR).

It belongs to the RING-type zinc finger family.

The catalysed reaction is S-ubiquitinyl-[E2 ubiquitin-conjugating enzyme]-L-cysteine + [acceptor protein]-L-lysine = [E2 ubiquitin-conjugating enzyme]-L-cysteine + N(6)-ubiquitinyl-[acceptor protein]-L-lysine.. The protein operates within protein modification; protein ubiquitination. This Arabidopsis thaliana (Mouse-ear cress) protein is Putative E3 ubiquitin-protein ligase RF298 (RF298).